The sequence spans 391 residues: Putative 1-acyl-sn-glycerol-3-phosphate acyltransferase acl-12 (391 aa).

2 helical membrane-spanning segments follow: residues 47–67 (FFFM…SLLF) and 84–104 (LCAM…ATVT). Positions 124-129 (HLGLLD) match the HXXXXD motif motif.

Belongs to the 1-acyl-sn-glycerol-3-phosphate acyltransferase family.

Its subcellular location is the membrane. The enzyme catalyses a 1-acyl-sn-glycero-3-phosphate + an acyl-CoA = a 1,2-diacyl-sn-glycero-3-phosphate + CoA. The protein operates within phospholipid metabolism; CDP-diacylglycerol biosynthesis; CDP-diacylglycerol from sn-glycerol 3-phosphate: step 2/3. Converts lysophosphatidic acid (LPA) into phosphatidic acid by incorporating an acyl moiety at the sn-2 position of the glycerol backbone. This is Putative 1-acyl-sn-glycerol-3-phosphate acyltransferase acl-12 (acl-12) from Caenorhabditis elegans.